The chain runs to 458 residues: Argininosuccinate lyase (458 aa).

It belongs to the lyase 1 family. Argininosuccinate lyase subfamily.

It localises to the cytoplasm. It carries out the reaction 2-(N(omega)-L-arginino)succinate = fumarate + L-arginine. It participates in amino-acid biosynthesis; L-arginine biosynthesis; L-arginine from L-ornithine and carbamoyl phosphate: step 3/3. In Actinobacillus pleuropneumoniae serotype 7 (strain AP76), this protein is Argininosuccinate lyase.